The following is a 642-amino-acid chain: Stress-activated map kinase-interacting protein 1 homolog (642 aa).

The CRIM domain occupies 189 to 314 (ARIREVIGYC…EREPLFQGLL (126 aa)). The tract at residues 603–642 (IVSPSSDAPSRSSNGKNGGKFRKMSSLMASVMGRRKSDSK) is disordered. Over residues 605 to 615 (SPSSDAPSRSS) the composition is skewed to low complexity.

The protein belongs to the SIN1 family. In terms of assembly, component of the target of rapamycin complex 2 (TORC2).

Its function is as follows. Component of the target of rapamycin complex 2 (TORC2), which transduces signals from growth factors to pathways involved in proliferation, cytoskeletal organization and anabolic output. In response to growth factors, TORC2 phosphorylates and activates AGC protein kinase family members, such as Akt1. Within the TORC2 complex, sinh-1 acts as a substrate adapter which recognizes and binds AGC protein kinase family members for phosphorylation by mTor. The protein is Stress-activated map kinase-interacting protein 1 homolog (sinh-1) of Caenorhabditis elegans.